We begin with the raw amino-acid sequence, 1705 residues long: Intersectin-1 (1705 aa).

2 EH domains span residues 21–109 and 220–309; these read ERAK…PVAM and SRLK…SFRR. EF-hand domains are found at residues 53–88 and 253–288; these read LPQP…IKLK and LPQS…IDVA. Residues Asp-66, Asn-68, Asp-70, Arg-72, Glu-77, Asp-266, Asp-268, Asp-270, Lys-272, and Glu-277 each contribute to the Ca(2+) site. Disordered stretches follow at residues 322–355, 386–433, and 668–708; these read VSVD…KREN, RAEQ…ERRE, and RYKF…PPEP. The segment at 325–697 is KLERQ; sequence DQRLPEEPEE…VEKKPEIQEK (373 aa). Basic and acidic residues predominate over residues 339-355; that stretch reads NADKKLPVTFEDKKREN. A coiled-coil region spans residues 350 to 687; sequence DKKRENFERG…KREESIQKCE (338 aa). Over residues 668 to 699 the composition is skewed to basic and acidic residues; the sequence is RYKFQDEEKEKREESIQKCEVEKKPEIQEKPN. Positions 732–793 constitute an SH3 1 domain; that stretch reads VKVVYYRALY…PANYAERMPE (62 aa). The span at 823–833 shows a compositional bias: low complexity; the sequence is AFTNTSTNSNN. Residues 823 to 851 are disordered; it reads AFTNTSTNSNNWADFSSTWPTNNTDKVES. Polar residues predominate over residues 834-846; sequence WADFSSTWPTNNT. The SH3 2 domain maps to 897–955; sequence VEGLQAQALYPWRAKKDNHLNFNKNDVITVLEQQDMWWFGEVQGQKGWFPKSYVKLISG. Residues 959 to 978 are disordered; it reads KSTSIDSTSSESPASLKRVS. Positions 960-973 are enriched in low complexity; sequence STSIDSTSSESPAS. 3 consecutive SH3 domains span residues 986 to 1044, 1058 to 1122, and 1139 to 1198; these read IQGE…PKDS, KKPE…LLSP, and PPTC…LTTD. Positions 1088–1111 match the Bipartite nuclear localization signal; in isoform 2 motif; that stretch reads RKKNPGGWWEGELQARGKKRQIGW. Residues 1221–1407 enclose the DH domain; the sequence is KRQGYIHELI…EELCSQVNEG (187 aa). One can recognise a PH domain in the interval 1446–1555; sequence KFLHSGKLYK…WVQKIKAASE (110 aa). A C2 domain is found at 1563–1679; sequence KKREKAYLVR…KKDQGSKGPV (117 aa). Residues Asp-1651, Ser-1654, and Asp-1657 each contribute to the Ca(2+) site.

As to quaternary structure, binds epn1 and epn2. The cofactor is Ca(2+).

It is found in the endomembrane system. Its subcellular location is the synapse. The protein localises to the synaptosome. It localises to the cell projection. The protein resides in the lamellipodium. It is found in the cell membrane. Its subcellular location is the membrane. The protein localises to the clathrin-coated pit. It localises to the recycling endosome. The protein resides in the cytoplasm. It is found in the nucleus envelope. Adapter protein that provides a link between the endocytic membrane traffic and the actin assembly machinery. Acts as a guanine nucleotide exchange factor (GEF) for cdc42, and thereby stimulates actin nucleation mediated by wasl and the arp2/3 complex. Involved in endocytosis of activated egfr, and probably also other growth factor receptors. The sequence is that of Intersectin-1 (itsn1) from Xenopus laevis (African clawed frog).